A 321-amino-acid chain; its full sequence is Acetyl-coenzyme A carboxylase carboxyl transferase subunit alpha (321 aa).

One can recognise a CoA carboxyltransferase C-terminal domain in the interval 37–298 (DLDDEIKRLQ…KQRILSDLED (262 aa)).

Belongs to the AccA family. Acetyl-CoA carboxylase is a heterohexamer composed of biotin carboxyl carrier protein (AccB), biotin carboxylase (AccC) and two subunits each of ACCase subunit alpha (AccA) and ACCase subunit beta (AccD).

The protein resides in the cytoplasm. The enzyme catalyses N(6)-carboxybiotinyl-L-lysyl-[protein] + acetyl-CoA = N(6)-biotinyl-L-lysyl-[protein] + malonyl-CoA. Its pathway is lipid metabolism; malonyl-CoA biosynthesis; malonyl-CoA from acetyl-CoA: step 1/1. Functionally, component of the acetyl coenzyme A carboxylase (ACC) complex. First, biotin carboxylase catalyzes the carboxylation of biotin on its carrier protein (BCCP) and then the CO(2) group is transferred by the carboxyltransferase to acetyl-CoA to form malonyl-CoA. This Mannheimia succiniciproducens (strain KCTC 0769BP / MBEL55E) protein is Acetyl-coenzyme A carboxylase carboxyl transferase subunit alpha.